We begin with the raw amino-acid sequence, 292 residues long: Bis(5'-nucleosyl)-tetraphosphatase, symmetrical (292 aa).

Belongs to the Ap4A hydrolase family.

The catalysed reaction is P(1),P(4)-bis(5'-adenosyl) tetraphosphate + H2O = 2 ADP + 2 H(+). Functionally, hydrolyzes diadenosine 5',5'''-P1,P4-tetraphosphate to yield ADP. This Yersinia enterocolitica serotype O:8 / biotype 1B (strain NCTC 13174 / 8081) protein is Bis(5'-nucleosyl)-tetraphosphatase, symmetrical.